A 151-amino-acid polypeptide reads, in one-letter code: Tetratricopeptide repeat protein 32 (151 aa).

3 TPR repeats span residues 8–41 (SHAT…CACA), 58–91 (ATAY…QPNF), and 92–125 (EVPY…NPGF).

In Homo sapiens (Human), this protein is Tetratricopeptide repeat protein 32 (TTC32).